Here is a 139-residue protein sequence, read N- to C-terminus: Large ribosomal subunit protein bL20 (139 aa).

This sequence belongs to the bacterial ribosomal protein bL20 family.

Binds directly to 23S ribosomal RNA and is necessary for the in vitro assembly process of the 50S ribosomal subunit. It is not involved in the protein synthesizing functions of that subunit. The chain is Large ribosomal subunit protein bL20 from Leuconostoc citreum (strain KM20).